A 74-amino-acid chain; its full sequence is UPF0346 protein LCA_0996 (74 aa).

This sequence belongs to the UPF0346 family.

This Latilactobacillus sakei subsp. sakei (strain 23K) (Lactobacillus sakei subsp. sakei) protein is UPF0346 protein LCA_0996.